We begin with the raw amino-acid sequence, 466 residues long: 3-isopropylmalate dehydratase large subunit (466 aa).

Residues Cys347, Cys407, and Cys410 each coordinate [4Fe-4S] cluster.

This sequence belongs to the aconitase/IPM isomerase family. LeuC type 1 subfamily. Heterodimer of LeuC and LeuD. [4Fe-4S] cluster is required as a cofactor.

It carries out the reaction (2R,3S)-3-isopropylmalate = (2S)-2-isopropylmalate. The protein operates within amino-acid biosynthesis; L-leucine biosynthesis; L-leucine from 3-methyl-2-oxobutanoate: step 2/4. Functionally, catalyzes the isomerization between 2-isopropylmalate and 3-isopropylmalate, via the formation of 2-isopropylmaleate. This chain is 3-isopropylmalate dehydratase large subunit, found in Buchnera aphidicola subsp. Diuraphis noxia.